Consider the following 25-residue polypeptide: Caerin-1.19 (25 aa).

The residue at position 25 (L25) is a Leucine amide.

It belongs to the frog skin active peptide (FSAP) family. Caerin subfamily. In terms of tissue distribution, expressed by the skin dorsal glands.

The protein localises to the secreted. Functionally, caerin-1.19 shows significant activity against Gram-positive organisms, but is less effective against Gram-negative organisms. This is Caerin-1.19 from Ranoidea gracilenta (Dainty green tree frog).